The chain runs to 94 residues: Small ribosomal subunit protein uS17 (94 aa).

It belongs to the universal ribosomal protein uS17 family. In terms of assembly, part of the 30S ribosomal subunit.

Functionally, one of the primary rRNA binding proteins, it binds specifically to the 5'-end of 16S ribosomal RNA. The sequence is that of Small ribosomal subunit protein uS17 from Streptomyces avermitilis (strain ATCC 31267 / DSM 46492 / JCM 5070 / NBRC 14893 / NCIMB 12804 / NRRL 8165 / MA-4680).